The primary structure comprises 24 residues: Unknown protein NF004 from 2D-PAGE (24 aa).

This Naegleria fowleri (Brain eating amoeba) protein is Unknown protein NF004 from 2D-PAGE.